Here is a 230-residue protein sequence, read N- to C-terminus: Large ribosomal subunit protein uL3 (230 aa).

Disordered regions lie at residues 125 to 149 (QAIGPRSHGGGGGSKPIRQTGSLGD) and 210 to 230 (PNPKNPVSLFVPNSDKEVKNE).

Belongs to the universal ribosomal protein uL3 family. As to quaternary structure, part of the 50S ribosomal subunit. Forms a cluster with proteins L14 and L19.

In terms of biological role, one of the primary rRNA binding proteins, it binds directly near the 3'-end of the 23S rRNA, where it nucleates assembly of the 50S subunit. The polypeptide is Large ribosomal subunit protein uL3 (Mesomycoplasma hyopneumoniae (strain J / ATCC 25934 / NCTC 10110) (Mycoplasma hyopneumoniae)).